We begin with the raw amino-acid sequence, 304 residues long: Porphobilinogen deaminase (304 aa).

Residue Cys-240 is modified to S-(dipyrrolylmethanemethyl)cysteine.

This sequence belongs to the HMBS family. In terms of assembly, monomer. Requires dipyrromethane as cofactor.

The enzyme catalyses 4 porphobilinogen + H2O = hydroxymethylbilane + 4 NH4(+). It participates in porphyrin-containing compound metabolism; protoporphyrin-IX biosynthesis; coproporphyrinogen-III from 5-aminolevulinate: step 2/4. In terms of biological role, tetrapolymerization of the monopyrrole PBG into the hydroxymethylbilane pre-uroporphyrinogen in several discrete steps. This is Porphobilinogen deaminase from Xanthomonas oryzae pv. oryzae (strain KACC10331 / KXO85).